A 263-amino-acid chain; its full sequence is Endonuclease 8 (263 aa).

Pro-2 serves as the catalytic Schiff-base intermediate with DNA. Catalysis depends on Glu-3, which acts as the Proton donor. Lys-53 (proton donor; for beta-elimination activity) is an active-site residue. Positions 70, 125, and 169 each coordinate DNA. The FPG-type zinc-finger motif lies at 229–263 (KVFHRDGEACERCGGIIEKTTLSSRPFYWCPHCQK). Catalysis depends on Arg-253, which acts as the Proton donor; for delta-elimination activity.

Belongs to the FPG family. Requires Zn(2+) as cofactor.

It catalyses the reaction 2'-deoxyribonucleotide-(2'-deoxyribose 5'-phosphate)-2'-deoxyribonucleotide-DNA = a 3'-end 2'-deoxyribonucleotide-(2,3-dehydro-2,3-deoxyribose 5'-phosphate)-DNA + a 5'-end 5'-phospho-2'-deoxyribonucleoside-DNA + H(+). Its function is as follows. Involved in base excision repair of DNA damaged by oxidation or by mutagenic agents. Acts as a DNA glycosylase that recognizes and removes damaged bases. Has a preference for oxidized pyrimidines, such as thymine glycol, 5,6-dihydrouracil and 5,6-dihydrothymine. Has AP (apurinic/apyrimidinic) lyase activity and introduces nicks in the DNA strand. Cleaves the DNA backbone by beta-delta elimination to generate a single-strand break at the site of the removed base with both 3'- and 5'-phosphates. This chain is Endonuclease 8, found in Salmonella paratyphi A (strain AKU_12601).